A 130-amino-acid chain; its full sequence is Small ribosomal subunit protein uS8 (130 aa).

It belongs to the universal ribosomal protein uS8 family. As to quaternary structure, part of the 30S ribosomal subunit. Contacts proteins S5 and S12.

One of the primary rRNA binding proteins, it binds directly to 16S rRNA central domain where it helps coordinate assembly of the platform of the 30S subunit. The protein is Small ribosomal subunit protein uS8 of Marinobacter nauticus (strain ATCC 700491 / DSM 11845 / VT8) (Marinobacter aquaeolei).